The primary structure comprises 485 residues: NADH-quinone oxidoreductase subunit N (485 aa).

Helical transmembrane passes span 8-28 (LIAL…MLSI), 35-55 (FLNA…LWFV), 71-91 (GFAM…CTFA), 105-125 (FYLL…ANHL), 127-147 (ALFL…GYAF), 159-179 (YTIL…LVYA), 203-223 (LLAG…LVPF), 235-255 (PAPV…GVVM), 271-291 (VVLG…ALSQ), 297-317 (LLGY…IALQ), 326-346 (VGVY…VVSL), 373-393 (AAVM…LGFI), 408-430 (WWLV…RVAV), and 455-475 (IVVL…QPLI).

It belongs to the complex I subunit 2 family. NDH-1 is composed of 13 different subunits. Subunits NuoA, H, J, K, L, M, N constitute the membrane sector of the complex.

Its subcellular location is the cell inner membrane. It catalyses the reaction a quinone + NADH + 5 H(+)(in) = a quinol + NAD(+) + 4 H(+)(out). Functionally, NDH-1 shuttles electrons from NADH, via FMN and iron-sulfur (Fe-S) centers, to quinones in the respiratory chain. The immediate electron acceptor for the enzyme in this species is believed to be ubiquinone. Couples the redox reaction to proton translocation (for every two electrons transferred, four hydrogen ions are translocated across the cytoplasmic membrane), and thus conserves the redox energy in a proton gradient. The sequence is that of NADH-quinone oxidoreductase subunit N from Salmonella schwarzengrund (strain CVM19633).